Consider the following 282-residue polypeptide: Pantothenate synthetase (282 aa).

30-37 (MGYLHEGH) lines the ATP pocket. The active-site Proton donor is His-37. Residue Gln-61 coordinates (R)-pantoate. Position 61 (Gln-61) interacts with beta-alanine. 147–150 (GMKD) is an ATP binding site. Residue Gln-153 coordinates (R)-pantoate. Residues Val-176 and 184–187 (KSSR) each bind ATP.

The protein belongs to the pantothenate synthetase family. In terms of assembly, homodimer.

It localises to the cytoplasm. It catalyses the reaction (R)-pantoate + beta-alanine + ATP = (R)-pantothenate + AMP + diphosphate + H(+). It functions in the pathway cofactor biosynthesis; (R)-pantothenate biosynthesis; (R)-pantothenate from (R)-pantoate and beta-alanine: step 1/1. Catalyzes the condensation of pantoate with beta-alanine in an ATP-dependent reaction via a pantoyl-adenylate intermediate. The sequence is that of Pantothenate synthetase from Bacillus anthracis (strain A0248).